The sequence spans 96 residues: Putative septation protein SpoVG (96 aa).

It belongs to the SpoVG family.

Its function is as follows. Essential for sporulation. Interferes with or is a negative regulator of the pathway leading to asymmetric septation. This Priestia megaterium (Bacillus megaterium) protein is Putative septation protein SpoVG.